The primary structure comprises 241 residues: Beta-nerve growth factor (241 aa).

Positions 1 to 18 are cleaved as a signal peptide; that stretch reads MSMLFYTLITAFLIGVQA. A propeptide spanning residues 19–121 is cleaved from the precursor; that stretch reads EPYTDSNVPE…PFNRTHRSKR (103 aa). N69 and N114 each carry an N-linked (GlcNAc...) asparagine glycan. Intrachain disulfides connect C136–C201, C179–C229, and C189–C231. Residues R171, Y173, and K209 each contribute to the a 1-acyl-sn-glycero-3-phospho-(1D-myo-inositol) site. Residue R171 participates in a 1-acyl-sn-glycero-3-phospho-L-serine binding. K209 serves as a coordination point for a 1-acyl-sn-glycero-3-phospho-L-serine.

This sequence belongs to the NGF-beta family. As to quaternary structure, homodimer. The homodimer interacts with a single NTRK1 chain. The homodimer interacts with a single NGFR chain. The NGF dimer interacts with a single SORCS2 chain (via extracellular domain). The NGF precursor (proNGF) binds to a receptor complex formed by SORT1 and NGFR, which leads to NGF endocytosis. Both mature NGF and the immature NGF precursor (proNGF) interact with SORCS2 and with the heterodimer formed by SORCS2 and NGFR (via extracellular domains). The NGF precursor (proNGF) has much higher affinity for SORCS2 than mature NGF. The NGF precursor (proNGF) has much higher affinity for SORT1 than mature NGF. Interacts with ADAM10 in a divalent cation-dependent manner. Interacts with SORCS3. Detected in submaxillary gland (at protein level). Highly expressed in male submaxillary gland. Levels are much lower in female submaxillary gland.

It localises to the secreted. Its subcellular location is the endosome lumen. Nerve growth factor is important for the development and maintenance of the sympathetic and sensory nervous systems. Extracellular ligand for the NTRK1 and NGFR receptors, activates cellular signaling cascades to regulate neuronal proliferation, differentiation and survival. The immature NGF precursor (proNGF) functions as a ligand for the heterodimeric receptor formed by SORCS2 and NGFR, and activates cellular signaling cascades that lead to inactivation of RAC1 and/or RAC2, reorganization of the actin cytoskeleton and neuronal growth cone collapse. In contrast to mature NGF, the precursor form (proNGF) promotes neuronal apoptosis (in vitro). Inhibits metalloproteinase-dependent proteolysis of platelet glycoprotein VI. Binds lysophosphatidylinositol and lysophosphatidylserine between the two chains of the homodimer. The lipid-bound form promotes histamine relase from mast cells, contrary to the lipid-free form. This Mus musculus (Mouse) protein is Beta-nerve growth factor (Ngf).